The chain runs to 323 residues: tRNA dimethylallyltransferase (323 aa).

12–19 contributes to the ATP binding site; sequence GPTAAGKT. Substrate is bound at residue 14–19; that stretch reads TAAGKT. 2 interaction with substrate tRNA regions span residues 37-40 and 161-165; these read DSAL and QRLMR.

Belongs to the IPP transferase family. As to quaternary structure, monomer. Requires Mg(2+) as cofactor.

The enzyme catalyses adenosine(37) in tRNA + dimethylallyl diphosphate = N(6)-dimethylallyladenosine(37) in tRNA + diphosphate. Its function is as follows. Catalyzes the transfer of a dimethylallyl group onto the adenine at position 37 in tRNAs that read codons beginning with uridine, leading to the formation of N6-(dimethylallyl)adenosine (i(6)A). This is tRNA dimethylallyltransferase from Pseudomonas paraeruginosa (strain DSM 24068 / PA7) (Pseudomonas aeruginosa (strain PA7)).